We begin with the raw amino-acid sequence, 245 residues long: Large ribosomal subunit protein uL3 (245 aa).

The residue at position 151 (Q151) is an N5-methylglutamine. The segment at 214-245 is disordered; sequence KDAPQPGKYRLANSAAPQPAEADAASDTGAQA. Residues 225 to 245 show a composition bias toward low complexity; that stretch reads ANSAAPQPAEADAASDTGAQA.

Belongs to the universal ribosomal protein uL3 family. As to quaternary structure, part of the 50S ribosomal subunit. Forms a cluster with proteins L14 and L19. In terms of processing, methylated by PrmB.

Functionally, one of the primary rRNA binding proteins, it binds directly near the 3'-end of the 23S rRNA, where it nucleates assembly of the 50S subunit. This Methylocella silvestris (strain DSM 15510 / CIP 108128 / LMG 27833 / NCIMB 13906 / BL2) protein is Large ribosomal subunit protein uL3.